Reading from the N-terminus, the 134-residue chain is Large ribosomal subunit protein bL12 (134 aa).

This sequence belongs to the bacterial ribosomal protein bL12 family. Homodimer. Part of the ribosomal stalk of the 50S ribosomal subunit. Forms a multimeric L10(L12)X complex, where L10 forms an elongated spine to which 2 to 4 L12 dimers bind in a sequential fashion. Binds GTP-bound translation factors.

Functionally, forms part of the ribosomal stalk which helps the ribosome interact with GTP-bound translation factors. Is thus essential for accurate translation. The protein is Large ribosomal subunit protein bL12 of Chlamydia abortus (strain DSM 27085 / S26/3) (Chlamydophila abortus).